The following is a 179-amino-acid chain: Bifunctional protein PyrR (179 aa).

The PRPP-binding motif lies at 100–112; that stretch reads VILVDDVLFTGRT.

Belongs to the purine/pyrimidine phosphoribosyltransferase family. PyrR subfamily.

It carries out the reaction UMP + diphosphate = 5-phospho-alpha-D-ribose 1-diphosphate + uracil. Its function is as follows. Regulates the transcription of the pyrimidine nucleotide (pyr) operon in response to exogenous pyrimidines. In terms of biological role, also displays a weak uracil phosphoribosyltransferase activity which is not physiologically significant. This is Bifunctional protein PyrR from Haemophilus influenzae (strain 86-028NP).